A 628-amino-acid chain; its full sequence is MSRFWHFKKFYFTSCYSMQRMRGKIFKNEPLVPMNVTSEHEQVQSISKEESRSLSSNDLNLSADSELQLESEPEIESEQLKNHEDVYEIIRSMVLAADTTLPRLSNNSLTGIYNHWKLNPNDDLPLYNPTKYTPYEFHSQYNQDRSYIITPRLSVTKLLVSSWCELRSFYQVYSGSVRLPSTKAMTQGTKLHSKLEAEVHPEIDTTEIEQFLISNAMSLRELQTTVPAEEETVVIDLGEVEQLAVDWAEMLIERLFSLIMGAEAREILLHGYLNLKNRSFVTNKDEIRESSSVLVSGIVDYIKLQNVTNPSDGTLFDDIHGFVDSAFDQVDNVPLVDLSQFLPEAKQILQNYDFRLTFTDVKTRSARQIPRQESVLEAAKFQTFYYRHFFHLLSRDSRFTYFSLIENAERRGHDVDKPLSILTTISLLRKHYHIFFKDFVKLANGEPIGFSPFDDSAKSIPYDFVSMFQSSDEFSLANPNHNHFLEQISAIDGIEYDSILSPLLKVWKTPPTLRYLAARASQLFNVFNENIGDITSVEYRYNKTSELLSEKVYDYNFSEFQAEVESASKFWNGEREVIPTEDLSRCSYCEFQSKCMVAGGKTTEAVEKKTIGPKIRQFLNECESSSKG.

Residues 1-21 (MSRFWHFKKFYFTSCYSMQRM) constitute a mitochondrion transit peptide. The disordered stretch occupies residues 37 to 58 (TSEHEQVQSISKEESRSLSSND). Positions 38-52 (SEHEQVQSISKEESR) are enriched in basic and acidic residues. Residues C164, C586, C589, and C595 each coordinate [4Fe-4S] cluster.

The protein belongs to the EXO5 family. Monomer. Mg(2+) is required as a cofactor. It depends on [4Fe-4S] cluster as a cofactor.

It localises to the mitochondrion. Functionally, single strand DNA specific 5' exonuclease involved in mitochondrial DNA replication and recombination. Releases dinucleotides as main products of catalysis. Has the capacity to slide across 5'double-stranded DNA or 5'RNA sequences and resumes cutting two nucleotides downstream of the double-stranded-to-single-stranded junction or RNA-to-DNA junction, respectively. In Candida albicans (strain SC5314 / ATCC MYA-2876) (Yeast), this protein is Exonuclease V, mitochondrial (DEM1).